The following is a 3018-amino-acid chain: MSTLPKPQRKTKRNTNRRPMDVKFPGGGQIVGGVYLLPRKGPRLGVRATRKTSERSQPRGRRQPIPKARQPQGRHWAQPGYPWPLYGSEGCGWAGWLLSPRGSRPHWGPNDPRRRSRNLGKVIDTLTCGFADLMWYIPVVGAPLGGVAAALAHGVRAIEDGINYATGNLPGCSFSIFLLALLSCLTTPASALTYGNSSGLYHLTNDCSNSSIVLEADAMILHLPGCLPCVRVGNQSTCWHAVSPTLATPNASTPATGFRRHVDLLAGAAVVCSSLYIGDLCGSLFLAGQLFAFQPRRHWTVQDCNCSIYTGHVTGHKMAWDMMMNWSPTTTLVLSSILRVPEICASVIFGGHWGILLAVAYFGMAGNWLKVLAVLFLFAGVEAQTMIAHGVSQTTSGFASLLTPGAKQNIQLINTNGSWHINRTALNCNDSLQTGFLASLFYTHKFNSSGCPERMAACKPLAEFRQGWGQITHKNVSGPSDDRPYCWHYAPRPCEVVPARSVCGPVYCFTPSPVVVGTTDKRGNPTYTWGENETDVFMLESLRPPTGGWFGCTWMNSTGFTKTCGAPPCQIVPGNYNSSANELLCPTDCFRKHPEATYQRCGSGPWVTPRCLVDYAYRLWHYPCTVNFTLHKVRMFVGGTEHRFDVACNWTRGERCELHDRNRIEMSPLLFSTTQLSILPCSFSTMPALSTGLIHLHQNIVDVQYLYGVSTNVTSWVVKWEYIVLMFLVLADARICTCLWLMLLISTVEAAVERLVVLNAASAAGTAGWWWAVLFLCCVWYVKGRLVPACTYMALGMWPLLLTILALPPRAYAMDNEQAASLGAVGLLVITIFSITPMYKKLLNCFIWWNQYFLARAEAMVHEWVPDLRVRGGRDSIILLTCLLHPQLGFEVTKILLAVLAPLYILQYSLLKVPYFVRAHILLRACLLVRRLAGGKYVQACLLRLGAWTGTFVYDHLAPLSDWASDGLRDLAVAVEPVIFSPMEKKIITWGADTAACGDILSGLPVSARLGNLVLLGPADDMQRGGWKLLAPITAYAQQTRGLVGTIVTSLTGRDKNEVEGEVQVVSTDTQSFVATSINGVMWTVYHGPGFKTLAGPKGPVCQMYTNVDLDLVGWPSPPGARSLTPCNCGSSDLYLVTREADVIPARRRGDSRAALLSPRPISTLKGSSGGPIMCPSGHVVGLFRAAVCTRGVAKSLDFIPVENMETTMRSPSFTDNSTPPAVPQTYQVGYLHAPTGSGKSTRVPAAYASQGYKVLVLNPSVAATLSFGSYMRQAYGVEPNIRTGVRTVTTGGAITYSTYGEFLADGGCSGGAYDIIICDECHSTDPTTVLGVGTVLDQAETAGVRLTVLPTATPPGSVTVPHPNITETALPTTGEIPFYGKAIPLEYIKGGRHLIFCHSKKKCDELAGKLKSLGLNAVAFYRGVDVSVIPTSGDVVVCATDALMTGYTGDFDSVIDCNVAVTQVVDFSLDPTFSIETTTVPQDAVSRSQRRGRTGRGKPGVYRFVSQGERPSGMFDTVVLCEAYDTGCAWYELTPSETTVRLRAYMNTPGLPVCQDHLEFWEGVFTGLTHIDAHFLSHTKQAGENFAYLVAYQATVCARAKAPPPSWDMMWKCLIRLKPTLTGPTPLLYRLGAVQNGVITTHPITKYIMTCMSADLEVITSTWVLVGGVLAALAAYCLSVGCVVICGRITLTGKPAVVPDREILYQQFDEMEECSRHIPYLAEGQQIAEQFRQKVLGLLQASAKQAEELKPAVHSAWPRVEDFWRKHMWNFVSGIQYLAGLSTLPGNPAVASLMSFTASLTSPLRTSQTLLLNILGGWIAAQVAPPPASTAFVVSGLAGAAVGSIRLGRVLVDVLAGYGAGVSGALVAFKIMSGECPSTEDMVNLLPALLSPGVALVGVVCAAILRRHVGPAEGANQWMNRLIAFASRGNHVSPTHYVPETDASKNVTQILTSLTITSLLRRLHQWVNEDTATPCATSWLRDVWDWVCTVLSDFKVWLQAKLFPRLPGIPFLSCQAGYRGVWAGDGVCHTTCTCGAVIAGHVKNGTMKITGPKTCSNTWHGTFPINATTTGPSTPRPAPNYQRALWRVSAEDYVEVRRLGDCHYVVGVTAEGLKCPCQVPAPEFFTEVDGVRIHRYAPPCKPLLRDEVTFSVGLSNYAVGSQLPCEPEPDVTVVTSMLTDPTHITAETAARRLKKGSPPSLASSSANQLSAPSLRATCTTSQKHPEMELLQANLLWKHEMGSHIPRVQSENKVVVLDSFELYPLEYEEREISVSVECHRQPRCKFPPVFPVWARPDNNPPFIQAWQMPGYEPPVVSGCAVAPPKPAPVPPPRRKRLVHLDESTVSHALAQLADKVFVESSNDPGPSSDSGLSITSPVPPDPTTPEDAGSEAESYSSMPPLEGEPGDPDLSSGSWSTVSDEDDVVCCSMSYSWTGALITPCAAEEEKLPINPLSNSLVRHHNMVYSTTSRSASLRQKKVTFDRVQVFDQHYQDVLKEIKLRASTVQAKLLSIEEACDLTPSHSARSKYGYGAQDVRSRASKAVDHIPSVWEGLLEDSDTPIPTTIMAKNEVFCVDPSKGGRKPARLIVYPDLGVRVCEKMALYDVTQKLPQAVMGPAYGFQYSPNQRVEYLLKMWRSKKVPMGFSYDTRCFDSTVTERDIRTENDIYQSCQLDPVARRVVSSLTERLYVGGPMANSKGQSCGYRRCRASGVLPTSMGNTLTCYLKAQAACRAANIKDCDMLVCGDDLVVICESAGVQEDTASLRAFTDAMTRYSAPPGDAPQPTYDLELITSCSSNVSVAHEGNGKKYYYLTRDCTTPLARAAWETARHTPVNSWLGNIIMFAPTIWVRMVLMNHFFSILQSQEQLEKAFDFDIYGVTYSVSPLDLPAIIQRLHGMAAFSLHGYSPVELNRVGACLRKLGVLPSRAWRHRARAVRAKLIAQGGKAAICGKYLFNWAVKTKLKLTPLVSASKLDLSGWFVAGYDGGDIYHSVSQARPRFLLLGLLLLTVGVGIFLLPAR.

At S2 the chain carries N-acetylserine; by host. Positions 2–23 (STLPKPQRKTKRNTNRRPMDVK) are interaction with STAT1. The interaction with EIF2AK2/PKR stretch occupies residues 2–58 (STLPKPQRKTKRNTNRRPMDVKFPGGGQIVGGVYLLPRKGPRLGVRATRKTSERSQP). The segment at 2–59 (STLPKPQRKTKRNTNRRPMDVKFPGGGQIVGGVYLLPRKGPRLGVRATRKTSERSQPR) is interaction with DDX3X. Positions 2-75 (STLPKPQRKT…PKARQPQGRH (74 aa)) are disordered. The Cytoplasmic portion of the chain corresponds to 2–168 (STLPKPQRKT…EDGINYATGN (167 aa)). 2 consecutive short sequence motifs (nuclear localization signal) follow at residues 5-13 (PKPQRKTKR) and 38-43 (PRKGPR). Residues 7–16 (PQRKTKRNTN) are compositionally biased toward basic residues. S53 bears the Phosphoserine; by host mark. 2 short sequence motifs (nuclear localization signal) span residues 58 to 64 (PRGRRQP) and 66 to 71 (PKARQP). Residues S99 and S116 each carry the phosphoserine; by host modification. The tract at residues 112–152 (PRRRSRNLGKVIDTLTCGFADLMWYIPVVGAPLGGVAAALA) is important for endoplasmic reticulum and mitochondrial localization. Residues 122-173 (VIDTLTCGFADLMWYIPVVGAPLGGVAAALAHGVRAIEDGINYATGNLPGCS) form an interaction with APOA2 region. Residues 164–167 (YATG) form an important for lipid droplets localization region. The helical transmembrane segment at 169–189 (LPGCSFSIFLLALLSCLTTPA) threads the bilayer. Residues 178-191 (LLALLSCLTTPASA) constitute a propeptide, ER anchor for the core protein, removed in mature form by host signal peptidase. Topologically, residues 190–358 (SALTYGNSSG…FGGHWGILLA (169 aa)) are lumenal. N-linked (GlcNAc...) asparagine; by host glycans are attached at residues N196, N209, N234, and N250. The tract at residues 265–296 (LAGAAVVCSSLYIGDLCGSLFLAGQLFAFQPR) is important for fusion. N-linked (GlcNAc...) asparagine; by host glycosylation occurs at N305. Residues 359–379 (VAYFGMAGNWLKVLAVLFLFA) form a helical membrane-spanning segment. The Lumenal portion of the chain corresponds to 380 to 729 (GVEAQTMIAH…WEYIVLMFLV (350 aa)). The tract at residues 385 to 411 (TMIAHGVSQTTSGFASLLTPGAKQNIQ) is HVR1. N-linked (GlcNAc...) (high mannose) asparagine; by host glycosylation is found at N416, N422, and N429. 4 cysteine pairs are disulfide-bonded: C428/C552, C451/C458, C486/C494, and C503/C508. N-linked (GlcNAc...) asparagine; by host glycosylation is present at N447. Residues 474-478 (KNVSG) are HVR2. A glycan (N-linked (GlcNAc...) asparagine; by host) is linked at N475. The tract at residues 480-493 (SDDRPYCWHYAPRP) is CD81-binding 1. N532 is a glycosylation site (N-linked (GlcNAc...) asparagine; by host). The tract at residues 544–551 (PPTGGWFG) is CD81-binding 2. Residue N556 is glycosylated (N-linked (GlcNAc...) asparagine; by host). The cysteines at positions 564 and 569 are disulfide-linked. N-linked (GlcNAc...) asparagine; by host glycosylation occurs at N577. Cystine bridges form between C585-C589, C601-C624, and C611-C648. 2 N-linked (GlcNAc...) (high mannose) asparagine; by host glycosylation sites follow: N627 and N649. An intrachain disulfide couples C656 to C681. The tract at residues 664-675 (IEMSPLLFSTTQ) is PKR/eIF2-alpha phosphorylation homology domain (PePHD). The helical transmembrane segment at 730–750 (LADARICTCLWLMLLISTVEA) threads the bilayer. At 751–761 (AVERLVVLNAA) the chain is on the lumenal side. Residues 762-782 (SAAGTAGWWWAVLFLCCVWYV) traverse the membrane as a helical segment. Residues 783 to 786 (KGRL) lie on the Cytoplasmic side of the membrane. Residues 787–807 (VPACTYMALGMWPLLLTILAL) form a helical membrane-spanning segment. Topologically, residues 808–817 (PPRAYAMDNE) are lumenal. A helical membrane pass occupies residues 818-838 (QAASLGAVGLLVITIFSITPM). At 839-885 (YKKLLNCFIWWNQYFLARAEAMVHEWVPDLRVRGGRDSIILLTCLLH) the chain is on the cytoplasmic side. The chain crosses the membrane as a helical span at residues 886-906 (PQLGFEVTKILLAVLAPLYIL). Topologically, residues 907 to 932 (QYSLLKVPYFVRAHILLRACLLVRRL) are lumenal. Residues 907-1030 (QYSLLKVPYF…DMQRGGWKLL (124 aa)) enclose the Peptidase C18 domain. Residues 908–1210 (YSLLKVPYFV…PVENMETTMR (303 aa)) are protease NS2-3. C926 is lipidated: S-palmitoyl cysteine; by host. The chain crosses the membrane as a helical span at residues 933 to 953 (AGGKYVQACLLRLGAWTGTFV). Positions 933–953 (AGGKYVQACLLRLGAWTGTFV) are interaction with host SCPS1. Residues 954-1661 (YDHLAPLSDW…CMSADLEVIT (708 aa)) lie on the Cytoplasmic side of the membrane. Active-site for protease NS2 activity; shared with dimeric partner residues include H956, E976, and C997. The region spanning 1031–1212 (APITAYAQQT…ENMETTMRSP (182 aa)) is the Peptidase S29 domain. Residues H1087 and D1111 each act as charge relay system; for serine protease NS3 activity in the active site. C1127 and C1129 together coordinate Zn(2+). Residue S1169 is the Charge relay system; for serine protease NS3 activity of the active site. 2 residues coordinate Zn(2+): C1175 and H1179. 1234-1241 (APTGSGKS) is an ATP binding site. Residues S1241 and E1321 each contribute to the Mg(2+) site. Positions 1320 to 1323 (DECH) match the DECH box motif. An RNA-binding region spans residues 1490-1502 (QRRGRTGRGKPGV). Residues 1662 to 1682 (STWVLVGGVLAALAAYCLSVG) form a helical membrane-spanning segment. The tract at residues 1683–1694 (CVVICGRITLTG) is NS3-binding. Topologically, residues 1683 to 1809 (CVVICGRITL…SLTSPLRTSQ (127 aa)) are cytoplasmic. Residues 1810-1830 (TLLLNILGGWIAAQVAPPPAS) traverse the membrane as a helical segment. The Lumenal portion of the chain corresponds to 1831–1832 (TA). A helical membrane pass occupies residues 1833-1853 (FVVSGLAGAAVGSIRLGRVLV). A topological domain (cytoplasmic) is located at residue D1854. The chain crosses the membrane as a helical span at residues 1855-1875 (VLAGYGAGVSGALVAFKIMSG). The Lumenal segment spans residues 1876-1885 (ECPSTEDMVN). A helical transmembrane segment spans residues 1886–1906 (LLPALLSPGVALVGVVCAAIL). At 1907 to 1976 (RRHVGPAEGA…WVNEDTATPC (70 aa)) the chain is on the cytoplasmic side. Residue C1976 is the site of S-palmitoyl cysteine; by host attachment. The stretch at 1977–2006 (ATSWLRDVWDWVCTVLSDFKVWLQAKLFPR) is an intramembrane region. Residues 2007–2997 (LPGIPFLSCQ…YHSVSQARPR (991 aa)) are Cytoplasmic-facing. Residues C2015, C2033, C2035, and C2056 each contribute to the Zn(2+) site. The interval 2124-2212 (EFFTEVDGVR…ASSSANQLSA (89 aa)) is FKBP8-binding. The interval 2124–2337 (EFFTEVDGVR…PVPPPRRKRL (214 aa)) is transcriptional activation. The interaction with non-structural protein 4A stretch occupies residues 2139–2143 (PPCKP). Positions 2192–2215 (RRLKKGSPPSLASSSANQLSAPSL) are disordered. The tract at residues 2193–2445 (RLKKGSPPSL…ALITPCAAEE (253 aa)) is interaction with host SKP2. A phosphoserine; by host mark is found at S2198, S2201, S2205, S2211, and S2214. Low complexity predominate over residues 2198–2215 (SPPSLASSSANQLSAPSL). Residues 2214–2253 (SLRATCTTSQKHPEMELLQANLLWKHEMGSHIPRVQSENK) are ISDR. The tract at residues 2214 to 2279 (SLRATCTTSQ…REISVSVECH (66 aa)) is interaction with EIF2AK2/PKR. An NS4B-binding region spans residues 2253-2311 (KVVVLDSFELYPLEYEEREISVSVECHRQPRCKFPPVFPVWARPDNNPPFIQAWQMPGY). The V3 stretch occupies residues 2304–2382 (QAWQMPGYEP…SITSPVPPDP (79 aa)). An SH3-binding motif is present at residues 2327–2330 (APVP). Residues 2332 to 2340 (PRRKRLVHL) carry the Nuclear localization signal motif. K2355 participates in a covalent cross-link: Glycyl lysine isopeptide (Lys-Gly) (interchain with G-Cter in ubiquitin). The tract at residues 2359 to 2417 (ESSNDPGPSSDSGLSITSPVPPDPTTPEDAGSEAESYSSMPPLEGEPGDPDLSSGSWST) is disordered. Positions 2360 to 2373 (SSNDPGPSSDSGLS) are enriched in low complexity. S2456 and S2469 each carry phosphoserine; by host. The RdRp catalytic domain maps to 2641–2759 (PMGFSYDTRC…ICESAGVQED (119 aa)). Mg(2+) is bound by residues D2647, D2745, and D2746. The chain crosses the membrane as a helical span at residues 2998–3018 (FLLLGLLLLTVGVGIFLLPAR).

Belongs to the hepacivirus polyprotein family. Homooligomer. Interacts with E1 (via C-terminus). Interacts with the non-structural protein 5A. Interacts (via N-terminus) with host STAT1 (via SH2 domain); this interaction results in decreased STAT1 phosphorylation and ubiquitin-mediated proteasome-dependent STAT1 degradation, leading to decreased IFN-stimulated gene transcription. Interacts with host STAT3; this interaction constitutively activates STAT3. Interacts with host LTBR receptor. Interacts with host TNFRSF1A receptor and possibly induces apoptosis. Interacts with host HNRPK. Interacts with host YWHAE. Interacts with host UBE3A/E6AP. Interacts with host DDX3X. Interacts with host APOA2. Interacts with host RXRA protein. Interacts with host SP110 isoform 3/Sp110b; this interaction sequesters the transcriptional corepressor SP110 away from the nucleus. Interacts with host CREB3 nuclear transcription protein; this interaction triggers cell transformation. Interacts with host ACY3. Interacts with host C1QR1. Interacts with host RBM24; this interaction, which enhances the interaction of the mature core protein with 5'-UTR, may inhibit viral translation and favor replication. Interacts with host EIF2AK2/PKR; this interaction induces the autophosphorylation of EIF2AK2. Part of the viral assembly initiation complex composed of NS2, E1, E2, NS3, NS4A, NS5A and the mature core protein. As to quaternary structure, forms a heterodimer with envelope glycoprotein E2. Interacts with mature core protein. Interacts with protease NS2. The heterodimer E1/E2 interacts with host CLDN1; this interaction plays a role in viral entry into host cell. Interacts with host SPSB2 (via C-terminus). Part of the viral assembly initiation complex composed of NS2, E1, E2, NS3, NS4A, NS5A and the mature core protein. Interacts with host NEURL3; this interaction prevents E1 binding to glycoprotein E2. In terms of assembly, forms a heterodimer with envelope glycoprotein E1. Interacts with host CD81 and SCARB1 receptors; these interactions play a role in viral entry into host cell. Interacts with host EIF2AK2/PKR; this interaction inhibits EIF2AK2 and probably allows the virus to evade the innate immune response. Interacts with host CD209/DC-SIGN and CLEC4M/DC-SIGNR. Interact with host SPCS1; this interaction is essential for viral particle assembly. Interacts with protease NS2. The heterodimer E1/E2 interacts with host CLDN1; this interaction plays a role in viral entry into host cell. Part of the viral assembly initiation complex composed of NS2, E1, E2, NS3, NS4A, NS5A and the mature core protein. Interacts with host SLC3A2/4F2hc; the interaction may facilitate viral entry into host cell. Interacts with human PLSCR1. Homohexamer. Homoheptamer. Interacts with protease NS2. As to quaternary structure, homodimer. Interacts with host SPCS1; this interaction is essential for viral particle assembly. Interacts with envelope glycoprotein E1. Interacts with envelope glycoprotein E2. Interacts with viroporin p7. Interacts with serine protease/helicase NS3. Part of the replication complex composed of NS2, NS3, NS4A, NS4B, NS5A and the RNA-directed RNA polymerase embedded in an ER-derived membranous web. Part of the viral assembly initiation complex composed of NS2, E1, E2, NS3, NS4A, NS5A and the mature core protein. In terms of assembly, interacts with protease NS2. Interacts with non-structural protein 4A; this interaction stabilizes the folding of NS3 serine protease. NS3-NS4A interaction is essential for NS3 activation and allows membrane anchorage of the latter. NS3/NS4A complex also prevents phosphorylation of host IRF3, thus preventing the establishment of dsRNA induced antiviral state. Interacts with host MAVS; this interaction leads to the cleavage and inhibition of host MAVS. Interacts with host TICAM1; this interaction leads to the cleavage and inhibition of host TICAM1. Interacts with host TANK-binding kinase/TBK1; this interaction results in the inhibition of the association between TBK1 and IRF3, which leads to the inhibition of IRF3 activation. Interacts with host RBM24. Part of the replication complex composed of NS2, NS3, NS4A, NS4B, NS5A and the RNA-directed RNA polymerase embedded in an ER-derived membranous web. Part of the viral assembly initiation complex composed of NS2, E1, E2, NS3, NS4A, NS5A and the mature core protein. Interacts with NS3 serine protease; this interaction stabilizes the folding of NS3 serine protease. NS3-NS4A interaction is essential for NS3 activation and allows membrane anchorage of the latter. Interacts with non-structural protein 5A (via N-terminus). Part of the replication complex composed of NS2, NS3, NS4A, NS4B, NS5A and the RNA-directed RNA polymerase embedded in an ER-derived membranous web. Part of the viral assembly initiation complex composed of NS2, E1, E2, NS3, NS4A, NS5A and the mature core protein. As to quaternary structure, homomultimer. Interacts with non-structural protein NS5A. Interacts with host PLA2G4C; this interaction likely initiates the recruitment of replication complexes to lipid droplets. Interacts with host STING; this interaction disrupts the interaction between STING and TBK1 thereby suppressing the interferon signaling. Part of the replication complex composed of NS2, NS3, NS4A, NS4B, NS5A and the RNA-directed RNA polymerase embedded in an ER-derived membranous web. In terms of assembly, monomer. Homodimer; dimerization is required for RNA-binding. Interacts with the mature core protein. Interacts (via N-terminus) with non-structural protein 4A. Interacts with non-structural protein 4B. Interacts (via region D2) with RNA-directed RNA polymerase. Part of the viral assembly initiation complex composed of NS2, E1, E2, NS3, NS4A, NS5A and the mature core protein. Part of the replication complex composed of NS2, NS3, NS4A, NS4B, NS5A and the RNA-directed RNA polymerase embedded in an ER-derived membranous web. Interacts with host GRB2. Interacts with host BIN1. Interacts with host PIK3R1. Interacts with host SRCAP. Interacts with host FKBP8. Interacts (via C-terminus) with host VAPB (via MSP domain). Interacts with host EIF2AK2/PKR; this interaction leads to disruption of EIF2AK2 dimerization by NS5A and probably allows the virus to evade the innate immune response. Interacts (via N-terminus) with host PACSIN2 (via N-terminus); this interaction attenuates protein kinase C alpha-mediated phosphorylation of PACSIN2 by disrupting the interaction between PACSIN2 and PRKCA. Interacts (via N-terminus) with host SRC kinase (via SH2 domain). Interacts with most Src-family kinases. Interacts with host IFI27 and SKP2; promotes the ubiquitin-mediated proteasomal degradation of NS5A. Interacts with host GPS2. Interacts with host TNFRSF21; this interaction allows the modulation by the virus of JNK, p38 MAPK, STAT3, and Akt signaling pathways in a DR6-dependent manner. Interacts (via N-terminus) with host CIDEB (via N-terminus); this interaction seems to regulate the association of HCV particles with APOE. Interacts with host CHKA/Choline Kinase-alpha; CHKA bridges host PI4KA and NS5A and potentiates NS5A-stimulated PI4KA activity, which then facilitates the targeting of the ternary complex to the ER for viral replication. Interacts with host SPSB2 (via C-terminus); this interaction targets NS5A for ubiquitination and degradation. Interacts with host RAB18; this interaction may promote the association of NS5A and other replicase components with lipid droplets. Interacts (via region D2) with host PPIA/CYPA; the interaction stimulates RNA-binding ability of NS5A and is dependent on the peptidyl-prolyl cis-trans isomerase activity of PPIA/CYPA. Interacts with host TRIM14; this interaction induces the degradation of NS5A. Homooligomer. Interacts with non-structural protein 5A. Interacts with host VAPB. Interacts with host PRK2/PKN2. Interacts with host HNRNPA1 and SEPT6; these interactions facilitate viral replication. Part of the replication complex composed of NS2, NS3, NS4A, NS4B, NS5A and the RNA-directed RNA polymerase. Requires Zn(2+) as cofactor. Mg(2+) serves as cofactor. In terms of processing, specific enzymatic cleavages in vivo yield mature proteins. The structural proteins, core, E1, E2 and p7 are produced by proteolytic processing by host signal peptidases. The core protein precursor is synthesized as a 23 kDa, which is retained in the ER membrane through the hydrophobic signal peptide. Cleavage by the signal peptidase releases the 21 kDa mature core protein. The cleavage of the core protein precursor occurs between aminoacids 176 and 188 but the exact cleavage site is not known. Some degraded forms of the core protein appear as well during the course of infection. The other proteins (p7, NS2, NS3, NS4A, NS4B, NS5A and NS5B) are cleaved by the viral proteases. Autoprocessing between NS2 and NS3 is mediated by the NS2 cysteine protease catalytic domain and regulated by the NS3 N-terminal domain. Phosphorylated by host PKC and PKA. Post-translationally, ubiquitinated; mediated by UBE3A and leading to core protein subsequent proteasomal degradation. In terms of processing, highly N-glycosylated. Palmitoylation is required for NS2/3 autoprocessing and E2 recruitment to membranes. Post-translationally, palmitoylated. This modification may play a role in its polymerization or in protein-protein interactions. In terms of processing, phosphorylated on serines in a basal form termed p56. p58 is a hyperphosphorylated form of p56. p56 and p58 coexist in the cell in roughly equivalent amounts. Hyperphosphorylation is dependent on the presence of NS4A. Host CSNK1A1/CKI-alpha or RPS6KB1 kinases may be responsible for NS5A phosphorylation. Tyrosine phosphorylation is essential for the interaction with host SRC. Post-translationally, the N-terminus is phosphorylated by host PRK2/PKN2.

It localises to the host endoplasmic reticulum membrane. It is found in the host mitochondrion membrane. Its subcellular location is the virion. The protein localises to the host cytoplasm. The protein resides in the host nucleus. It localises to the host lipid droplet. It is found in the virion membrane. Its subcellular location is the host mitochondrion. The protein localises to the host cell membrane. The protein resides in the host perinuclear region. It catalyses the reaction Hydrolysis of four peptide bonds in the viral precursor polyprotein, commonly with Asp or Glu in the P6 position, Cys or Thr in P1 and Ser or Ala in P1'.. It carries out the reaction a ribonucleoside 5'-triphosphate + H2O = a ribonucleoside 5'-diphosphate + phosphate + H(+). The enzyme catalyses ATP + H2O = ADP + phosphate + H(+). The catalysed reaction is RNA(n) + a ribonucleoside 5'-triphosphate = RNA(n+1) + diphosphate. Inhibited by the antiviral drug hexamethylene amiloride. Inhibition by amantadine appears to be genotype-dependent. Also inhibited by long-alkyl-chain iminosugar derivatives. Its activity is regulated as follows. Activity is up-regulated by PRK2/PKN2-mediated phosphorylation. Functionally, packages viral RNA to form a viral nucleocapsid, and promotes virion budding. Participates in the viral particle production as a result of its interaction with the non-structural protein 5A. Binds RNA and may function as a RNA chaperone to induce the RNA structural rearrangements taking place during virus replication. Modulates viral translation initiation by interacting with viral IRES and 40S ribosomal subunit. Affects various cell signaling pathways, host immunity and lipid metabolism. Prevents the establishment of cellular antiviral state by blocking the interferon-alpha/beta (IFN-alpha/beta) and IFN-gamma signaling pathways and by blocking the formation of phosphorylated STAT1 and promoting ubiquitin-mediated proteasome-dependent degradation of STAT1. Activates STAT3 leading to cellular transformation. Regulates the activity of cellular genes, including c-myc and c-fos. May repress the promoter of p53, and sequester CREB3 and SP110 isoform 3/Sp110b in the cytoplasm. Represses cell cycle negative regulating factor CDKN1A, thereby interrupting an important check point of normal cell cycle regulation. Targets transcription factors involved in the regulation of inflammatory responses and in the immune response: suppresses TNF-induced NF-kappa-B activation, and activates AP-1. Binds to dendritic cells (DCs) via C1QR1, resulting in down-regulation of T-lymphocytes proliferation. Alters lipid metabolism by interacting with hepatocellular proteins involved in lipid accumulation and storage. Induces up-regulation of FAS promoter activity, and thereby contributes to the increased triglyceride accumulation in hepatocytes (steatosis). Forms a heterodimer with envelope glycoprotein E2, which mediates virus attachment to the host cell, virion internalization through clathrin-dependent endocytosis and fusion with host membrane. Fusion with the host cell is most likely mediated by both E1 and E2, through conformational rearrangements of the heterodimer required for fusion rather than a classical class II fusion mechanism. E1/E2 heterodimer binds host apolipoproteins such as APOB and ApoE thereby forming a lipo-viro-particle (LVP). APOE associated to the LVP allows the initial virus attachment to cell surface receptors such as the heparan sulfate proteoglycans (HSPGs), syndecan-1 (SDC1), syndecan-1 (SDC2), the low-density lipoprotein receptor (LDLR) and scavenger receptor class B type I (SCARB1). The cholesterol transfer activity of SCARB1 allows E2 exposure and binding of E2 to SCARB1 and the tetraspanin CD81. E1/E2 heterodimer binding on CD81 activates the epithelial growth factor receptor (EGFR) signaling pathway. Diffusion of the complex E1-E2-EGFR-SCARB1-CD81 to the cell lateral membrane allows further interaction with Claudin 1 (CLDN1) and occludin (OCLN) to finally trigger HCV entry. In terms of biological role, forms a heterodimer with envelope glycoprotein E1, which mediates virus attachment to the host cell, virion internalization through clathrin-dependent endocytosis and fusion with host membrane. Fusion with the host cell is most likely mediated by both E1 and E2, through conformational rearrangements of the heterodimer required for fusion rather than a classical class II fusion mechanism. The interaction between envelope glycoprotein E2 and host apolipoprotein E/APOE allows the proper assembly, maturation and infectivity of the viral particles. This interaction is probably promoted via the up-regulation of cellular autophagy by the virus. E1/E2 heterodimer binds host apolipoproteins such as APOB and APOE thereby forming a lipo-viro-particle (LVP). APOE associated to the LVP allows the initial virus attachment to cell surface receptors such as the heparan sulfate proteoglycans (HSPGs), syndecan-1 (SDC1), syndecan-1 (SDC2), the low-density lipoprotein receptor (LDLR) and scavenger receptor class B type I (SCARB1). The cholesterol transfer activity of SCARB1 allows E2 exposure and binding of E2 to SCARB1 and the tetraspanin CD81. E1/E2 heterodimer binding on CD81 activates the epithelial growth factor receptor (EGFR) signaling pathway. Diffusion of the complex E1-E2-EGFR-SCARB1-CD81 to the cell lateral membrane allows further interaction with Claudin 1 (CLDN1) and occludin (OCLN) to finally trigger HCV entry. Inhibits host EIF2AK2/PKR activation, preventing the establishment of an antiviral state. Viral ligand for CD209/DC-SIGN and CLEC4M/DC-SIGNR, which are respectively found on dendritic cells (DCs), and on liver sinusoidal endothelial cells and macrophage-like cells of lymph node sinuses. These interactions allow the capture of circulating HCV particles by these cells and subsequent facilitated transmission to permissive cells such as hepatocytes and lymphocyte subpopulations. The interaction between E2 and host amino acid transporter complex formed by SLC3A2 and SLC7A5/LAT1 may facilitate viral entry into host cell. Its function is as follows. Ion channel protein that acts as a viroporin and plays an essential role in the assembly, envelopment and secretion of viral particles. Regulates the host cell secretory pathway, which induces the intracellular retention of viral glycoproteins and favors assembly of viral particles. Creates a pore in acidic organelles and releases Ca(2+) and H(+) in the cytoplasm of infected cells, leading to a productive viral infection. High levels of cytoplasmic Ca(2+) may trigger membrane trafficking and transport of viral ER-associated proteins to viroplasms, sites of viral genome replication. This ionic imbalance induces the assembly of the inflammasome complex, which triggers the maturation of pro-IL-1beta into IL-1beta through the action of caspase-1. Targets also host mitochondria and induces mitochondrial depolarization. In addition of its role as a viroporin, acts as a lipid raft adhesion factor. Functionally, cysteine protease required for the proteolytic auto-cleavage between the non-structural proteins NS2 and NS3. The N-terminus of NS3 is required for the function of NS2 protease (active region NS2-3). Promotes the initiation of viral particle assembly by mediating the interaction between structural and non-structural proteins. Displays three enzymatic activities: serine protease with a chymotrypsin-like fold, NTPase and RNA helicase. NS3 serine protease, in association with NS4A, is responsible for the cleavages of NS3-NS4A, NS4A-NS4B, NS4B-NS5A and NS5A-NS5B. The NS3/NS4A complex prevents phosphorylation of host IRF3, thus preventing the establishment of dsRNA induced antiviral state. The NS3/NS4A complex induces host amino acid transporter component SLC3A2, thus contributing to HCV propagation. NS3 RNA helicase binds to RNA and unwinds both dsDNA and dsRNA in the 3' to 5' direction, and likely resolves RNA complicated stable secondary structures in the template strand. Binds a single ATP and catalyzes the unzipping of a single base pair of dsRNA. Inhibits host antiviral proteins TBK1 and IRF3 thereby preventing the establishment of an antiviral state. Cleaves host MAVS/CARDIF thereby preventing the establishment of an antiviral state. Cleaves host TICAM1/TRIF, thereby disrupting TLR3 signaling and preventing the establishment of an antiviral state. In terms of biological role, induces a specific membrane alteration that serves as a scaffold for the virus replication complex. This membrane alteration gives rise to the so-called ER-derived membranous web that contains the replication complex. NS4B self-interaction contributes to its function in membranous web formation. Promotes host TRIF protein degradation in a CASP8-dependent manner thereby inhibiting host TLR3-mediated interferon signaling. Disrupts the interaction between STING and TBK1 contributing to the inhibition of interferon signaling. Its function is as follows. Phosphorylated protein that is indispensable for viral replication and assembly. Both hypo- and hyperphosphorylated states are required for the viral life cycle. The hyperphosphorylated form of NS5A is an inhibitor of viral replication. Involved in RNA-binding and especially in binding to the viral genome. Zinc is essential for RNA-binding. Participates in the viral particle production as a result of its interaction with the mature viral core protein. Its interaction with host VAPB may target the viral replication complex to vesicles. Down-regulates viral IRES translation initiation. Mediates interferon resistance, presumably by interacting with and inhibiting host EIF2AK2/PKR. Prevents BIN1-induced apoptosis. Acts as a transcriptional activator of some host genes important for viral replication when localized in the nucleus. Via the interaction with host PACSIN2, modulates lipid droplet formation in order to promote virion assembly. Modulates TNFRSF21/DR6 signaling pathway for viral propagation. Functionally, RNA-dependent RNA polymerase that performs primer-template recognition and RNA synthesis during viral replication. Initiates RNA transcription/replication at a flavin adenine dinucleotide (FAD), resulting in a 5'- FAD cap on viral RNAs. In this way, recognition of viral 5' RNA by host pattern recognition receptors can be bypassed, thereby evading activation of antiviral pathways. The polypeptide is Genome polyprotein (Hepatitis C virus genotype 6a (isolate EUHK2) (HCV)).